The sequence spans 448 residues: Trigger factor (448 aa).

Residues 161–246 (GDQVTIDFEG…VHKVAGKQLP (86 aa)) form the PPIase FKBP-type domain. The disordered stretch occupies residues 428–448 (ALQAAQQQEGAEEEAQEETSA). The span at 437-448 (GAEEEAQEETSA) shows a compositional bias: acidic residues.

It belongs to the FKBP-type PPIase family. Tig subfamily.

Its subcellular location is the cytoplasm. The enzyme catalyses [protein]-peptidylproline (omega=180) = [protein]-peptidylproline (omega=0). Involved in protein export. Acts as a chaperone by maintaining the newly synthesized protein in an open conformation. Functions as a peptidyl-prolyl cis-trans isomerase. This chain is Trigger factor, found in Chromohalobacter salexigens (strain ATCC BAA-138 / DSM 3043 / CIP 106854 / NCIMB 13768 / 1H11).